The following is a 378-amino-acid chain: UPF0754 membrane protein BT9727_0767 (378 aa).

2 helical membrane passes run 1–21 (MNIWLSMLTTTGLGAIIGGFT) and 357–377 (YLGALLGGMIGIVQGLLLLFL).

It belongs to the UPF0754 family.

The protein resides in the cell membrane. This is UPF0754 membrane protein BT9727_0767 from Bacillus thuringiensis subsp. konkukian (strain 97-27).